The sequence spans 447 residues: Asparagine--tRNA ligase (447 aa).

It belongs to the class-II aminoacyl-tRNA synthetase family. As to quaternary structure, homodimer.

It is found in the cytoplasm. The catalysed reaction is tRNA(Asn) + L-asparagine + ATP = L-asparaginyl-tRNA(Asn) + AMP + diphosphate + H(+). The protein is Asparagine--tRNA ligase of Streptococcus pneumoniae serotype 4 (strain ATCC BAA-334 / TIGR4).